A 119-amino-acid chain; its full sequence is Small ribosomal subunit protein uS10 (119 aa).

It belongs to the universal ribosomal protein uS10 family. In terms of assembly, component of the 40S small ribosomal subunit.

The protein localises to the cytoplasm. Component of the small ribosomal subunit. The ribosome is a large ribonucleoprotein complex responsible for the synthesis of proteins in the cell. This is Small ribosomal subunit protein uS10 (rps20) from Xenopus laevis (African clawed frog).